Consider the following 167-residue polypeptide: Homeobox protein EgHBX3 (167 aa).

The homeobox DNA-binding region spans 80 to 139; the sequence is SQSKRRVLFNKFQISQLEKRLKQRYLTAQERQELAHTIGLTPTQVKIWFQNHAYKMKRLF.

Belongs to the NK-2 homeobox family.

The protein resides in the nucleus. The polypeptide is Homeobox protein EgHBX3 (HBX3) (Echinococcus granulosus (Hydatid tapeworm)).